A 381-amino-acid chain; its full sequence is NAD-dependent methanol dehydrogenase (381 aa).

This sequence belongs to the iron-containing alcohol dehydrogenase family. As to quaternary structure, homodecamer. It depends on Mg(2+) as a cofactor. Zn(2+) serves as cofactor.

It is found in the cytoplasm. The catalysed reaction is methanol + NAD(+) = formaldehyde + NADH + H(+). It participates in one-carbon metabolism; methanol degradation; formaldehyde from methanol: step 1/1. With respect to regulation, stimulated by the activator protein Act which requires the presence of magnesium ions. Inhibited by 1,10-phenanthroline. Catalyzes the oxidation of methanol to yield formaldehyde. It possesses a NADH-dependent formaldehyde reductase activity and cannot use NADP. The protein is NAD-dependent methanol dehydrogenase of Bacillus methanolicus.